The chain runs to 375 residues: Methylthioribose-1-phosphate isomerase (375 aa).

D257 functions as the Proton donor in the catalytic mechanism.

It belongs to the eIF-2B alpha/beta/delta subunits family. MtnA subfamily.

It is found in the cytoplasm. It localises to the nucleus. It carries out the reaction 5-(methylsulfanyl)-alpha-D-ribose 1-phosphate = 5-(methylsulfanyl)-D-ribulose 1-phosphate. It participates in amino-acid biosynthesis; L-methionine biosynthesis via salvage pathway; L-methionine from S-methyl-5-thio-alpha-D-ribose 1-phosphate: step 1/6. Its function is as follows. Catalyzes the interconversion of methylthioribose-1-phosphate (MTR-1-P) into methylthioribulose-1-phosphate (MTRu-1-P). In Leishmania infantum, this protein is Methylthioribose-1-phosphate isomerase.